We begin with the raw amino-acid sequence, 290 residues long: Porphobilinogen deaminase (290 aa).

S-(dipyrrolylmethanemethyl)cysteine is present on C237.

This sequence belongs to the HMBS family. In terms of assembly, monomer. The cofactor is dipyrromethane.

It carries out the reaction 4 porphobilinogen + H2O = hydroxymethylbilane + 4 NH4(+). It functions in the pathway porphyrin-containing compound metabolism; protoporphyrin-IX biosynthesis; coproporphyrinogen-III from 5-aminolevulinate: step 2/4. Its function is as follows. Tetrapolymerization of the monopyrrole PBG into the hydroxymethylbilane pre-uroporphyrinogen in several discrete steps. This chain is Porphobilinogen deaminase, found in Clostridium botulinum (strain Langeland / NCTC 10281 / Type F).